Here is a 982-residue protein sequence, read N- to C-terminus: Ubiquitin carboxyl-terminal hydrolase 15 (982 aa).

Positions 7–118 (VDLETQRSEV…SQQPIARKVV (112 aa)) constitute a DUSP domain. Residues 288 to 933 (CGLSNLGNTC…AAYVLFYQRQ (646 aa)) enclose the USP domain. Catalysis depends on Cys297, which acts as the Nucleophile. Positions 623-695 (TEENDGSLHC…DNDSENGLCT (73 aa)) are disordered. Acidic residues predominate over residues 655–672 (METDEPDDESSQDQELPS). The active-site Proton acceptor is His891. Positions 950–982 (QGASAATGAPHESDEESNEDENDIENENCMHTN) are disordered. Positions 962-975 (SDEESNEDENDIEN) are enriched in acidic residues.

It belongs to the peptidase C19 family.

It is found in the cytoplasm. The protein localises to the nucleus. The catalysed reaction is Thiol-dependent hydrolysis of ester, thioester, amide, peptide and isopeptide bonds formed by the C-terminal Gly of ubiquitin (a 76-residue protein attached to proteins as an intracellular targeting signal).. Functionally, hydrolase that removes conjugated ubiquitin from target proteins and regulates various pathways such as the TGF-beta receptor signaling and NF-kappa-B pathways. Acts as a key regulator of TGF-beta receptor signaling pathway, but the precise mechanism is still unclear: according to a report, acts by promoting deubiquitination of monoubiquitinated R-SMADs, thereby alleviating inhibition of R-SMADs and promoting activation of TGF-beta target genes. According to another reports, regulates the TGF-beta receptor signaling pathway by mediating deubiquitination and stabilization of tgfbr1, leading to an enhanced TGF-beta signal. May also regulate gene expression and/or DNA repair through the deubiquitination of histone H2B. Involved in endosome organization by mediating deubiquitination of rnf26 target(s), releasing vesicles that are restrained in the perinuclear region. In Xenopus tropicalis (Western clawed frog), this protein is Ubiquitin carboxyl-terminal hydrolase 15 (usp15).